The following is a 558-amino-acid chain: Ankyrin repeat protein OPG189 (558 aa).

7 ANK repeats span residues 65 to 95, 169 to 205, 209 to 239, 243 to 272, 276 to 304, 339 to 368, and 372 to 401; these read YGEN…NINK, YGCT…DVDK, YGNT…NIDS, NRYT…NVNA, FGTT…ELEI, YNET…DFET, and SGCT…SLKI.

Belongs to the orthopoxvirus OPG189 protein family.

Contributes to viral release without involving rearrangement of host actin. In Vaccinia virus (strain Western Reserve) (VACV), this protein is Ankyrin repeat protein OPG189 (OPG189).